A 178-amino-acid chain; its full sequence is Fibroin heavy chain (178 aa).

An N-terminal signal peptide occupies residues 1 to 21; it reads MRVKTFVILCCALQYVAYTNA. Residues 149–178 are highly repetitive; sequence AVGAGAGAGAAAGSGAGAGAGYGAASGAGA.

Silk fibroin elementary unit consists in a disulfide-linked heavy and light chain and a p25 glycoprotein in molar ratios of 6:6:1. This results in a complex of approximately 2.3 MDa. The interchain disulfide bridge is essential for the intracellular transport and secretion of fibroin. In terms of tissue distribution, produced exclusively in the posterior (PSG) section of silk glands, which are essentially modified salivary glands.

Its function is as follows. Core component of the silk filament; a strong, insoluble and chemically inert fiber. This Bombyx mandarina (Wild silk moth) protein is Fibroin heavy chain (FIBH).